Consider the following 233-residue polypeptide: MADS-box transcription factor 20 (233 aa).

An MADS-box domain is found at Met-1 to His-61. One can recognise a K-box domain in the interval Glu-91–Cys-184.

As to expression, expressed in developing seeds and seedling shoots.

The protein localises to the nucleus. Functionally, probable transcription factor. The polypeptide is MADS-box transcription factor 20 (MADS20) (Oryza sativa subsp. japonica (Rice)).